Here is a 257-residue protein sequence, read N- to C-terminus: Phosphonates import ATP-binding protein PhnC (257 aa).

The ABC transporter domain maps to 2–246 (IEFRNVSKVY…KFAEIYGDVA (245 aa)). 35–42 (GLSGAGKS) provides a ligand contact to ATP.

Belongs to the ABC transporter superfamily. Phosphonates importer (TC 3.A.1.9.1) family. In terms of assembly, the complex is composed of two ATP-binding proteins (PhnC), two transmembrane proteins (PhnE) and a solute-binding protein (PhnD).

The protein resides in the cell membrane. It carries out the reaction phosphonate(out) + ATP + H2O = phosphonate(in) + ADP + phosphate + H(+). In terms of biological role, part of the ABC transporter complex PhnCDE involved in phosphonates import. Responsible for energy coupling to the transport system. The polypeptide is Phosphonates import ATP-binding protein PhnC (Bacillus cereus (strain ATCC 14579 / DSM 31 / CCUG 7414 / JCM 2152 / NBRC 15305 / NCIMB 9373 / NCTC 2599 / NRRL B-3711)).